Reading from the N-terminus, the 148-residue chain is MPIGELAIGAVLGVGAQAIYDRFRKARDISFVHRLCATILSIEPFLVQIDKRSKVEGSPLREVNERLTCFLELAYVFVEAYPKLRRRQVLRKYRYIKAIETIELALRSIIVVDFQVDQWDDIKEIKAKISEMDTKLAEVISACSKIRA.

An RPW8 domain is found at 1 to 148 (MPIGELAIGA…VISACSKIRA (148 aa)). Residues 7 to 23 (AIGAVLGVGAQAIYDRF) form a helical membrane-spanning segment. Residues 120–140 (DDIKEIKAKISEMDTKLAEVI) are a coiled coil.

It belongs to the plant RPW8 protein family.

It is found in the membrane. In terms of biological role, disease resistance (R) protein that induces localized, salicylic acid-dependent defenses. Confers resistance to powdery mildew (e.g. Erysiphe cichoracearum UCSC1). This Arabidopsis thaliana (Mouse-ear cress) protein is Protein RESISTANCE TO POWDERY MILDEW 8.1.